A 227-amino-acid polypeptide reads, in one-letter code: Cytochrome c oxidase subunit 2 (227 aa).

The Mitochondrial intermembrane portion of the chain corresponds to 1–14 (MAYPFQLGLQDATS). The helical transmembrane segment at 15-45 (PIMEELTNFHDHTLMIVFLISSLVLYIISLM) threads the bilayer. Residues 46-59 (LTTKLTHTNTMDAQ) are Mitochondrial matrix-facing. A helical transmembrane segment spans residues 60-87 (EVETIWTILPAVILILIALPSLRILYMM). The Mitochondrial intermembrane portion of the chain corresponds to 88–227 (DEINNPALTV…HFENWSASMI (140 aa)). The Cu cation site is built by histidine 161, cysteine 196, glutamate 198, cysteine 200, histidine 204, and methionine 207. Residue glutamate 198 coordinates Mg(2+).

This sequence belongs to the cytochrome c oxidase subunit 2 family. As to quaternary structure, component of the cytochrome c oxidase (complex IV, CIV), a multisubunit enzyme composed of 14 subunits. The complex is composed of a catalytic core of 3 subunits MT-CO1, MT-CO2 and MT-CO3, encoded in the mitochondrial DNA, and 11 supernumerary subunits COX4I, COX5A, COX5B, COX6A, COX6B, COX6C, COX7A, COX7B, COX7C, COX8 and NDUFA4, which are encoded in the nuclear genome. The complex exists as a monomer or a dimer and forms supercomplexes (SCs) in the inner mitochondrial membrane with NADH-ubiquinone oxidoreductase (complex I, CI) and ubiquinol-cytochrome c oxidoreductase (cytochrome b-c1 complex, complex III, CIII), resulting in different assemblies (supercomplex SCI(1)III(2)IV(1) and megacomplex MCI(2)III(2)IV(2)). Found in a complex with TMEM177, COA6, COX18, COX20, SCO1 and SCO2. Interacts with TMEM177 in a COX20-dependent manner. Interacts with COX20. Interacts with COX16. Cu cation serves as cofactor.

The protein localises to the mitochondrion inner membrane. The catalysed reaction is 4 Fe(II)-[cytochrome c] + O2 + 8 H(+)(in) = 4 Fe(III)-[cytochrome c] + 2 H2O + 4 H(+)(out). Functionally, component of the cytochrome c oxidase, the last enzyme in the mitochondrial electron transport chain which drives oxidative phosphorylation. The respiratory chain contains 3 multisubunit complexes succinate dehydrogenase (complex II, CII), ubiquinol-cytochrome c oxidoreductase (cytochrome b-c1 complex, complex III, CIII) and cytochrome c oxidase (complex IV, CIV), that cooperate to transfer electrons derived from NADH and succinate to molecular oxygen, creating an electrochemical gradient over the inner membrane that drives transmembrane transport and the ATP synthase. Cytochrome c oxidase is the component of the respiratory chain that catalyzes the reduction of oxygen to water. Electrons originating from reduced cytochrome c in the intermembrane space (IMS) are transferred via the dinuclear copper A center (CU(A)) of subunit 2 and heme A of subunit 1 to the active site in subunit 1, a binuclear center (BNC) formed by heme A3 and copper B (CU(B)). The BNC reduces molecular oxygen to 2 water molecules using 4 electrons from cytochrome c in the IMS and 4 protons from the mitochondrial matrix. The polypeptide is Cytochrome c oxidase subunit 2 (MT-CO2) (Sundamys muelleri (Mueller's giant sunda rat)).